The following is a 148-amino-acid chain: Small ribosomal subunit protein eS6 (148 aa).

The protein belongs to the eukaryotic ribosomal protein eS6 family.

This chain is Small ribosomal subunit protein eS6, found in Pyrobaculum neutrophilum (strain DSM 2338 / JCM 9278 / NBRC 100436 / V24Sta) (Thermoproteus neutrophilus).